A 111-amino-acid chain; its full sequence is Colicin-Ia immunity protein (111 aa).

The next 2 helical transmembrane spans lie at 33–53 and 85–105; these read LLFW…KWYI and TGTV…SVII.

It localises to the cell membrane. Its function is as follows. This protein is able to protect a cell, which harbors the plasmid ColIa-CA53 encoding colicin Ia, against colicin Ia. The polypeptide is Colicin-Ia immunity protein (Escherichia coli).